Here is a 145-residue protein sequence, read N- to C-terminus: Ribonuclease VapC48 (145 aa).

2 residues coordinate Mg(2+): aspartate 6 and aspartate 109. In terms of domain architecture, PINc spans 15-141; that stretch reads HRASPFHDKA…RKFEGIRIRD (127 aa).

This sequence belongs to the PINc/VapC protein family. Requires Mg(2+) as cofactor.

Functionally, toxic component of a type II toxin-antitoxin (TA) system. An RNase. Its cognate antitoxin is VapB48. This chain is Ribonuclease VapC48, found in Mycobacterium tuberculosis (strain CDC 1551 / Oshkosh).